The following is a 274-amino-acid chain: uncharacterized protein (274 aa).

A disordered region spans residues 253 to 274 (QTGDVRTTEGTALTDDTTKRNI).

This is an uncharacterized protein from Deinococcus radiodurans (strain ATCC 13939 / DSM 20539 / JCM 16871 / CCUG 27074 / LMG 4051 / NBRC 15346 / NCIMB 9279 / VKM B-1422 / R1).